The sequence spans 1205 residues: Partitioning defective 3 homolog B (1205 aa).

Disordered stretches follow at residues 83 to 104 (EPLH…PDAF) and 137 to 165 (VRRS…SLKL). Ser100 bears the Phosphoserine mark. Positions 201–289 (TRTVEISGEG…SPSVLLHVLP (89 aa)) constitute a PDZ 1 domain. Residues 318–374 (VPPPVHGKSGLKTANLTGTDSPETDASASLQQNKSPRVPRLGGKPSSPSLSPLMGFG) form a disordered region. A compositionally biased stretch (polar residues) spans 329 to 352 (KTANLTGTDSPETDASASLQQNKS). 3 positions are modified to phosphoserine: Ser346, Ser352, and Ser368. Residues 356 to 374 (PRLGGKPSSPSLSPLMGFG) show a composition bias toward low complexity. PDZ domains are found at residues 383–468 (KIDL…VIAR) and 498–585 (EIPL…GMIQ). Ser635, Ser710, Ser728, Ser730, Ser746, Ser749, and Ser801 each carry phosphoserine. The tract at residues 707 to 743 (ASKSMDLVPDESKVHSLAGQKSESPSKDFGPTLGLKK) is disordered. Disordered regions lie at residues 784–921 (AIDK…KHQE) and 1111–1205 (PYYP…TAAV). Polar residues predominate over residues 806-822 (HSGQGALNCESAPQGNS). Composition is skewed to basic and acidic residues over residues 838 to 865 (KEKE…DPER) and 881 to 921 (KKED…KHQE). Phosphoserine is present on Ser1184.

The protein belongs to the PAR3 family. In terms of assembly, interacts with PARD6B. Interacts with INSC/inscuteable. In terms of tissue distribution, highly expressed in kidney, lung and skeletal muscle. Expressed at intermediate levels in brain, heart, placenta, liver and pancreas. Isoform 1 is predominant, while isoform 2 and isoform 3 are expressed at lower levels.

It is found in the endomembrane system. The protein resides in the cell junction. The protein localises to the tight junction. Putative adapter protein involved in asymmetrical cell division and cell polarization processes. May play a role in the formation of epithelial tight junctions. The polypeptide is Partitioning defective 3 homolog B (PARD3B) (Homo sapiens (Human)).